Reading from the N-terminus, the 308-residue chain is Ribosomal RNA small subunit methyltransferase H (308 aa).

Residues 36 to 38 (GGH), aspartate 55, phenylalanine 86, aspartate 103, and glutamine 110 each bind S-adenosyl-L-methionine.

The protein belongs to the methyltransferase superfamily. RsmH family.

It is found in the cytoplasm. The enzyme catalyses cytidine(1402) in 16S rRNA + S-adenosyl-L-methionine = N(4)-methylcytidine(1402) in 16S rRNA + S-adenosyl-L-homocysteine + H(+). Functionally, specifically methylates the N4 position of cytidine in position 1402 (C1402) of 16S rRNA. This Helicobacter pylori (strain P12) protein is Ribosomal RNA small subunit methyltransferase H.